The chain runs to 191 residues: Cell division protein SepF (191 aa).

Over residues 153 to 178 the composition is skewed to polar residues; it reads FPEEASPSNVSSKKTSQYKFETNTTP. Residues 153–191 are disordered; that stretch reads FPEEASPSNVSSKKTSQYKFETNTTPEPAWGESKLSAYN.

Belongs to the SepF family. In terms of assembly, homodimer. Interacts with FtsZ.

Its subcellular location is the cytoplasm. Cell division protein that is part of the divisome complex and is recruited early to the Z-ring. Probably stimulates Z-ring formation, perhaps through the cross-linking of FtsZ protofilaments. Its function overlaps with FtsA. The protein is Cell division protein SepF of Prochlorococcus marinus subsp. pastoris (strain CCMP1986 / NIES-2087 / MED4).